A 124-amino-acid chain; its full sequence is Small ribosomal subunit protein uS12 (124 aa).

The residue at position 89 (aspartate 89) is a 3-methylthioaspartic acid.

The protein belongs to the universal ribosomal protein uS12 family. Part of the 30S ribosomal subunit. Contacts proteins S8 and S17. May interact with IF1 in the 30S initiation complex.

In terms of biological role, with S4 and S5 plays an important role in translational accuracy. Functionally, interacts with and stabilizes bases of the 16S rRNA that are involved in tRNA selection in the A site and with the mRNA backbone. Located at the interface of the 30S and 50S subunits, it traverses the body of the 30S subunit contacting proteins on the other side and probably holding the rRNA structure together. The combined cluster of proteins S8, S12 and S17 appears to hold together the shoulder and platform of the 30S subunit. In Photobacterium profundum (strain SS9), this protein is Small ribosomal subunit protein uS12.